Consider the following 130-residue polypeptide: Small ribosomal subunit protein uS8 (130 aa).

It belongs to the universal ribosomal protein uS8 family. In terms of assembly, part of the 30S ribosomal subunit. Contacts proteins S5 and S12.

Its function is as follows. One of the primary rRNA binding proteins, it binds directly to 16S rRNA central domain where it helps coordinate assembly of the platform of the 30S subunit. This Shewanella denitrificans (strain OS217 / ATCC BAA-1090 / DSM 15013) protein is Small ribosomal subunit protein uS8.